The sequence spans 312 residues: Ribosomal RNA small subunit methyltransferase H (312 aa).

Residues 33–35, Asp53, Phe80, Asp101, and Gln108 each bind S-adenosyl-L-methionine; that span reads SGH.

It belongs to the methyltransferase superfamily. RsmH family.

It is found in the cytoplasm. The enzyme catalyses cytidine(1402) in 16S rRNA + S-adenosyl-L-methionine = N(4)-methylcytidine(1402) in 16S rRNA + S-adenosyl-L-homocysteine + H(+). Its function is as follows. Specifically methylates the N4 position of cytidine in position 1402 (C1402) of 16S rRNA. The polypeptide is Ribosomal RNA small subunit methyltransferase H (Desulforapulum autotrophicum (strain ATCC 43914 / DSM 3382 / VKM B-1955 / HRM2) (Desulfobacterium autotrophicum)).